The sequence spans 151 residues: Large ribosomal subunit protein uL15 (151 aa).

The segment at 1–57 is disordered; sequence MTLRLDSLKSNKGARRRKLRKGRGIAAGQGASCGFGMRGQKSRSGRPTRPGFEGGQM. Basic residues predominate over residues 12-23; that stretch reads KGARRRKLRKGR. Residues 25 to 37 show a composition bias toward gly residues; sequence IAAGQGASCGFGM.

This sequence belongs to the universal ribosomal protein uL15 family. In terms of assembly, part of the 50S ribosomal subunit.

In terms of biological role, binds to the 23S rRNA. In Synechococcus sp. (strain CC9605), this protein is Large ribosomal subunit protein uL15.